Reading from the N-terminus, the 503-residue chain is Cytochrome P450 7A1 (503 aa).

The helical transmembrane segment at 4-24 threads the bilayer; sequence ISLIWGIAVLVSCCIWFIVGI. C444 contacts heme.

This sequence belongs to the cytochrome P450 family. It depends on heme as a cofactor. In terms of tissue distribution, detected in liver (at protein level). Liver.

It is found in the endoplasmic reticulum membrane. Its subcellular location is the microsome membrane. It carries out the reaction cholesterol + reduced [NADPH--hemoprotein reductase] + O2 = 7alpha-hydroxycholesterol + oxidized [NADPH--hemoprotein reductase] + H2O + H(+). The catalysed reaction is 4beta-hydroxycholesterol + reduced [NADPH--hemoprotein reductase] + O2 = 4beta,7alpha-dihydroxycholesterol + oxidized [NADPH--hemoprotein reductase] + H2O + H(+). The enzyme catalyses lathosterol + reduced [NADPH--hemoprotein reductase] + O2 = 7alpha,8alpha-epoxy-5alpha-cholestan-3beta-ol + oxidized [NADPH--hemoprotein reductase] + H2O + H(+). It catalyses the reaction lathosterol + reduced [NADPH--hemoprotein reductase] + O2 = 5alpha-cholestan-7-oxo-3beta-ol + oxidized [NADPH--hemoprotein reductase] + H2O + H(+). It carries out the reaction 7-dehydrocholesterol + reduced [NADPH--hemoprotein reductase] + O2 = 7-oxocholesterol + oxidized [NADPH--hemoprotein reductase] + H2O + H(+). The catalysed reaction is (24S)-hydroxycholesterol + reduced [NADPH--hemoprotein reductase] + O2 = (24S)-7alpha-dihydroxycholesterol + oxidized [NADPH--hemoprotein reductase] + H2O + H(+). The enzyme catalyses (24R)-hydroxycholesterol + reduced [NADPH--hemoprotein reductase] + O2 = (24R)-7alpha-dihydroxycholesterol + oxidized [NADPH--hemoprotein reductase] + H2O + H(+). It participates in lipid metabolism; bile acid biosynthesis. It functions in the pathway steroid metabolism; cholesterol degradation. A cytochrome P450 monooxygenase involved in the metabolism of endogenous cholesterol and its oxygenated derivatives (oxysterols). Mechanistically, uses molecular oxygen inserting one oxygen atom into a substrate, and reducing the second into a water molecule, with two electrons provided by NADPH via cytochrome P450 reductase (CPR; NADPH-ferrihemoprotein reductase). Functions as a critical regulatory enzyme of bile acid biosynthesis and cholesterol homeostasis. Catalyzes the hydroxylation of carbon hydrogen bond at 7-alpha position of cholesterol, a rate-limiting step in cholesterol catabolism and bile acid biosynthesis. 7-alpha hydroxylates several oxysterols, including 4beta-hydroxycholesterol and 24-hydroxycholesterol. Catalyzes the oxidation of the 7,8 double bond of 7-dehydrocholesterol and lathosterol with direct and predominant formation of the 7-keto derivatives. The protein is Cytochrome P450 7A1 (Cyp7a1) of Rattus norvegicus (Rat).